We begin with the raw amino-acid sequence, 457 residues long: MSAGKIIQIIGAVIDVEFPQNAVPKVYDALKVESGLTLEVQQQLGGGVVRCIALGSSDGLKRGLKVENTGNPISVPVGTKTLGRIMNVLGEPIDEKGEIGAEEYWAIHRAAPSYEEQSNSTELLETGIKVIDLICPFAKGGKVGLFGGAGVGKTVNMMELIRNIAIEHSGYSVFAGVGERTREGNDFYHEMTESNVLDKVSLVYGQMNEPPGNRLRVALTGLTMAEKFRDEGRDVLFFVDNIYRYTLAGTEVSALLGRMPSAVGYQPTLAEEMGVLQERITSTKTGSITSVQAVYVPADDLTDPSPATTFAHLDSTVVLSRNIASLGIYPAVDPLDSTSRQLDPLVVGQEHYDVARGVQGILQRYKELKDIIAILGMDELSEDDKLVVARARKIERFLSQPFFVAEVFTGSPGKYVSLKDTIRGFKGILDGEYDHIPEQAFYMVGSIEEVLEKAKKM.

Residue 147–154 (GGAGVGKT) participates in ATP binding.

The protein belongs to the ATPase alpha/beta chains family. As to quaternary structure, F-type ATPases have 2 components, CF(1) - the catalytic core - and CF(0) - the membrane proton channel. CF(1) has five subunits: alpha(3), beta(3), gamma(1), delta(1), epsilon(1). CF(0) has three main subunits: a(1), b(2) and c(9-12). The alpha and beta chains form an alternating ring which encloses part of the gamma chain. CF(1) is attached to CF(0) by a central stalk formed by the gamma and epsilon chains, while a peripheral stalk is formed by the delta and b chains.

It is found in the cell inner membrane. It carries out the reaction ATP + H2O + 4 H(+)(in) = ADP + phosphate + 5 H(+)(out). Functionally, produces ATP from ADP in the presence of a proton gradient across the membrane. The catalytic sites are hosted primarily by the beta subunits. This Histophilus somni (strain 2336) (Haemophilus somnus) protein is ATP synthase subunit beta.